The primary structure comprises 217 residues: Pyridoxine/pyridoxamine 5'-phosphate oxidase (217 aa).

Substrate is bound by residues 13–16 (RREY) and K71. FMN-binding positions include 66-71 (RIVLLK), 81-82 (YT), R87, K88, and Q110. Residues Y128, R132, and S136 each contribute to the substrate site. FMN-binding positions include 145–146 (QS) and W190. Position 196-198 (196-198 (RLH)) interacts with substrate. R200 serves as a coordination point for FMN.

Belongs to the pyridoxamine 5'-phosphate oxidase family. Homodimer. Requires FMN as cofactor.

It catalyses the reaction pyridoxamine 5'-phosphate + O2 + H2O = pyridoxal 5'-phosphate + H2O2 + NH4(+). It carries out the reaction pyridoxine 5'-phosphate + O2 = pyridoxal 5'-phosphate + H2O2. It functions in the pathway cofactor metabolism; pyridoxal 5'-phosphate salvage; pyridoxal 5'-phosphate from pyridoxamine 5'-phosphate: step 1/1. The protein operates within cofactor metabolism; pyridoxal 5'-phosphate salvage; pyridoxal 5'-phosphate from pyridoxine 5'-phosphate: step 1/1. Functionally, catalyzes the oxidation of either pyridoxine 5'-phosphate (PNP) or pyridoxamine 5'-phosphate (PMP) into pyridoxal 5'-phosphate (PLP). The polypeptide is Pyridoxine/pyridoxamine 5'-phosphate oxidase (Yersinia enterocolitica serotype O:8 / biotype 1B (strain NCTC 13174 / 8081)).